The chain runs to 447 residues: Adenylosuccinate synthetase (447 aa).

GTP is bound by residues Gly-35–Lys-41 and Gly-63–Thr-65. The active-site Proton acceptor is Asp-36. Residues Asp-36 and Gly-63 each coordinate Mg(2+). IMP-binding positions include Asp-36–Lys-39, Asn-61–His-64, Thr-153, Arg-167, Asn-245, Thr-260, and Arg-324. Catalysis depends on His-64, which acts as the Proton donor. Val-320–Arg-326 is a binding site for substrate. GTP contacts are provided by residues Arg-326, Lys-352–Asp-354, and Gly-435–Gly-437.

This sequence belongs to the adenylosuccinate synthetase family. In terms of assembly, homodimer. Requires Mg(2+) as cofactor.

Its subcellular location is the cytoplasm. It carries out the reaction IMP + L-aspartate + GTP = N(6)-(1,2-dicarboxyethyl)-AMP + GDP + phosphate + 2 H(+). The protein operates within purine metabolism; AMP biosynthesis via de novo pathway; AMP from IMP: step 1/2. Its function is as follows. Plays an important role in the de novo pathway and in the salvage pathway of purine nucleotide biosynthesis. Catalyzes the first committed step in the biosynthesis of AMP from IMP. The sequence is that of Adenylosuccinate synthetase from Drosophila erecta (Fruit fly).